Consider the following 294-residue polypeptide: Protein C3orf33 homolog (294 aa).

An N-acetylalanine modification is found at Ala-2. The chain crosses the membrane as a helical span at residues 36–53 (LVQNISTGMAIAGIMLLI). Positions 244 to 271 (KPAGADLGSTKDSYHDSRRRASGKGKDS) are disordered.

Its subcellular location is the membrane. Its function is as follows. May play a role in transcription regulation. The chain is Protein C3orf33 homolog from Mus musculus (Mouse).